Reading from the N-terminus, the 346-residue chain is [LysW]-lysine/[LysW]-ornithine hydrolase (346 aa).

Position 68 (His-68) interacts with Zn(2+). Residue Asp-70 is part of the active site. Asp-92 serves as a coordination point for Zn(2+). Glu-122 acts as the Proton acceptor in catalysis. Residues Glu-123, Glu-146, and His-317 each coordinate Zn(2+).

The protein belongs to the peptidase M20A family. LysK subfamily. Zn(2+) is required as a cofactor. Co(2+) serves as cofactor.

Its subcellular location is the cytoplasm. The catalysed reaction is [amino-group carrier protein]-C-terminal-gamma-(L-lysyl)-L-glutamate + H2O = [amino-group carrier protein]-C-terminal-L-glutamate + L-lysine. It carries out the reaction [amino-group carrier protein]-C-terminal-gamma-(L-ornithyl)-L-glutamate + H2O = [amino-group carrier protein]-C-terminal-L-glutamate + L-ornithine. Its pathway is amino-acid biosynthesis; L-lysine biosynthesis via AAA pathway; L-lysine from L-alpha-aminoadipate (Thermus route): step 5/5. It participates in amino-acid biosynthesis; L-arginine biosynthesis. Catalyzes the release of L-lysine from [LysW]-gamma-L-lysine and the release of L-ornithine from [LysW]-L-ornithine. In Saccharolobus islandicus (strain M.16.4 / Kamchatka #3) (Sulfolobus islandicus), this protein is [LysW]-lysine/[LysW]-ornithine hydrolase.